Here is a 346-residue protein sequence, read N- to C-terminus: S-adenosylmethionine:tRNA ribosyltransferase-isomerase (346 aa).

This sequence belongs to the QueA family. As to quaternary structure, monomer.

Its subcellular location is the cytoplasm. The enzyme catalyses 7-aminomethyl-7-carbaguanosine(34) in tRNA + S-adenosyl-L-methionine = epoxyqueuosine(34) in tRNA + adenine + L-methionine + 2 H(+). Its pathway is tRNA modification; tRNA-queuosine biosynthesis. Transfers and isomerizes the ribose moiety from AdoMet to the 7-aminomethyl group of 7-deazaguanine (preQ1-tRNA) to give epoxyqueuosine (oQ-tRNA). The protein is S-adenosylmethionine:tRNA ribosyltransferase-isomerase of Cereibacter sphaeroides (strain KD131 / KCTC 12085) (Rhodobacter sphaeroides).